The primary structure comprises 592 residues: Signal peptide peptidase-like 2B (592 aa).

An N-terminal signal peptide occupies residues 1–25 (MAAAVAAALARLLAAFLLLAAQVAC). At 26 to 174 (EYGMVHVVSQ…APKEPVLDYN (149 aa)) the chain is on the lumenal side. A PA domain is found at 71-149 (TASLLCSAAD…VALLSYKDML (79 aa)). N-linked (GlcNAc...) asparagine glycans are attached at residues Asn-97 and Asn-129. A helical transmembrane segment spans residues 175 to 195 (MVIIFIMAVGTVAIGGYWAGS). Residues 196-221 (RDVKKRYMKHKRDDGPEKQEDEAVDV) lie on the Cytoplasmic side of the membrane. A helical transmembrane segment spans residues 222-244 (TPVMTCVFVVMCCSMLVLLYYFY). Residues 245-248 (DLLV) are Lumenal-facing. The chain crosses the membrane as a helical span at residues 249–271 (YVVIGIFCLASATGLYSCLAPCV). The Cytoplasmic segment spans residues 272–293 (RRLPFGKCRIPNNSLPYFHKRP). The helical transmembrane segment at 294 to 314 (QARMLLLALFCVAVSVVWGVF) threads the bilayer. Residues 315–319 (RNEDQ) are Lumenal-facing. A helical membrane pass occupies residues 320–340 (WAWVLQDALGIAFCLYMLKTI). Over 341-348 (RLPTFKAC) the chain is Cytoplasmic. The chain crosses the membrane as a helical span at residues 349-369 (TLLLLVLFLYDIFFVFITPFL). Asp-359 is a catalytic residue. At 370–412 (TKSGSSIMVEVATGPSDSATREKLPMVLKVPRLNSSPLALCDR) the chain is on the lumenal side. The helical transmembrane segment at 413–433 (PFSLLGFGDILVPGLLVAYCH) threads the bilayer. The active site involves Asp-421. Residues 434 to 445 (RFDIQVQSSRVY) are Cytoplasmic-facing. A helical membrane pass occupies residues 446 to 466 (FVACTIAYGVGLLVTFVALAL). Topologically, residues 467-470 (MQRG) are lumenal. Residues 471 to 491 (QPALLYLVPCTLVTSCAVALW) traverse the membrane as a helical segment. Positions 472–474 (PAL) match the PAL motif. The Cytoplasmic portion of the chain corresponds to 492-592 (RRELGVFWTG…SPVTQPGASA (101 aa)). Residues 512 to 524 (PWAPAPADGPQPP) are compositionally biased toward pro residues. The interval 512-592 (PWAPAPADGP…SPVTQPGASA (81 aa)) is disordered. The segment covering 580–592 (AQPSPVTQPGASA) has biased composition (polar residues).

It belongs to the peptidase A22B family. As to quaternary structure, monomer. Homodimer. Interacts with ITM2B. Interacts with TNF. Interacts with the simian foamy virus envelope glycoprotein gp130 and its processed leader peptide gp18LP; preferentially interacts with the leader peptide gp18LP. In terms of processing, glycosylated. Expressed predominantly in adrenal cortex and mammary gland.

The protein localises to the cell membrane. Its subcellular location is the golgi apparatus membrane. The protein resides in the lysosome membrane. It is found in the endosome membrane. It localises to the membrane. Its function is as follows. Intramembrane-cleaving aspartic protease (I-CLiP) that cleaves type II membrane signal peptides in the hydrophobic plane of the membrane. Functions in ITM2B and TNF processing. Catalyzes the intramembrane cleavage of the anchored fragment of shed TNF-alpha (TNF), which promotes the release of the intracellular domain (ICD) for signaling to the nucleus. May play a role in the regulation of innate and adaptive immunity. Catalyzes the intramembrane cleavage of the simian foamy virus processed leader peptide gp18 of the envelope glycoprotein gp130 dependently of prior ectodomain shedding by furin or furin-like proprotein convertase (PC)-mediated cleavage proteolysis. The sequence is that of Signal peptide peptidase-like 2B from Homo sapiens (Human).